The primary structure comprises 570 residues: Molecular chaperone MKKS (570 aa).

192–199 contributes to the ATP binding site; that stretch reads ERMVLGKS. A substrate-binding apical domain region spans residues 198-370; that stretch reads KSIIVPLKGQ…FHLLPNEATV (173 aa).

This sequence belongs to the TCP-1 chaperonin family. In terms of assembly, component of a complex composed at least of MKKS, BBS10, BBS12, TCP1, CCT2, CCT3, CCT4, CCT5 and CCT8. Interacts with STUB1. Interacts with BBS2 (via coiled coil domain). Interacts with CCDC28B. Interacts with BBS12. Interacts with SMARCC1, a component of the SWI/SNF complexes; the interaction takes place predominantly in the cytoplasm and may modulate SMARCC1 location. Interacts with DLEC1. In terms of tissue distribution, widely expressed in adult and fetal tissues. Expressed in the developing heart, brain retina, limb buds, as well as in the developing neural tube. Expressed in the embryo in the first and second branchial arches. Expressed in parafin embedded tissue sections of brain, kidney, retina, olfactory epithelium and the ependymal layer of ventricles. Detected only in restricted regions of these tissue sections, including the ciliated border of renal tubules, the connecting cilium and the inner and outer nuclear layers of retina, and the ciliated layer of olfactory epithelia.

It is found in the cytoplasm. It localises to the cytoskeleton. Its subcellular location is the microtubule organizing center. The protein resides in the centrosome. The protein localises to the cytosol. It is found in the nucleus. In terms of biological role, probable molecular chaperone that assists the folding of proteins upon ATP hydrolysis. Plays a role in the assembly of BBSome, a complex involved in ciliogenesis regulating transports vesicles to the cilia. May play a role in protein processing in limb, cardiac and reproductive system development. May play a role in cytokinesis. The sequence is that of Molecular chaperone MKKS (Mkks) from Mus musculus (Mouse).